A 285-amino-acid chain; its full sequence is 4-hydroxybenzoate octaprenyltransferase (285 aa).

The next 9 membrane-spanning stretches (helical) occupy residues 19–39, 42–62, 82–102, 104–124, 136–156, 166–186, 210–230, 233–253, and 265–285; these read IGSL…ADGL, WHVL…GCVI, LPSG…LVVC, FLLV…GIVL, YLPQ…AYAA, WLLF…YAMV, IIGL…SQLA, GIYY…QWLI, and FLNN…SVLI.

The protein belongs to the UbiA prenyltransferase family. It depends on Mg(2+) as a cofactor.

The protein localises to the cell inner membrane. The catalysed reaction is all-trans-octaprenyl diphosphate + 4-hydroxybenzoate = 4-hydroxy-3-(all-trans-octaprenyl)benzoate + diphosphate. The protein operates within cofactor biosynthesis; ubiquinone biosynthesis. Functionally, catalyzes the prenylation of para-hydroxybenzoate (PHB) with an all-trans polyprenyl group. Mediates the second step in the final reaction sequence of ubiquinone-8 (UQ-8) biosynthesis, which is the condensation of the polyisoprenoid side chain with PHB, generating the first membrane-bound Q intermediate 3-octaprenyl-4-hydroxybenzoate. The protein is 4-hydroxybenzoate octaprenyltransferase of Aliivibrio fischeri (strain ATCC 700601 / ES114) (Vibrio fischeri).